The chain runs to 603 residues: Variable flagella 3 (603 aa).

Positions 169-289 (GGEVSAELRR…TEDLEARDRR (121 aa)) form a coiled coil. Residues 288–297 (RRMNSTDRIR) are compositionally biased toward basic and acidic residues. Disordered stretches follow at residues 288-526 (RRMN…PARA) and 539-564 (AGRG…SSKS). Residues 337–348 (SRSNSRGRGTSS) show a composition bias toward low complexity. Residues 364–380 (PRFDPTEYVRQRKERES) show a composition bias toward basic and acidic residues. Positions 397–406 (AGTSRASSVV) are enriched in polar residues. The segment covering 486 to 510 (GASGGGAGGWSKFPGGGGGGVGGSG) has biased composition (gly residues). The span at 511–520 (QRISSNSPRS) shows a compositional bias: polar residues.

Belongs to the CCDC61 family.

The protein localises to the cytoplasm. The protein resides in the cytoskeleton. It localises to the flagellum basal body. Functionally, required for normal flagella and striated fiber formation. In Chlamydomonas reinhardtii (Chlamydomonas smithii), this protein is Variable flagella 3.